Reading from the N-terminus, the 238-residue chain is tRNA (guanine-N(7)-)-methyltransferase (238 aa).

Positions 70, 95, 122, and 145 each coordinate S-adenosyl-L-methionine. Asp-145 is an active-site residue. Residues Lys-149, Asp-181, and 216–219 each bind substrate; that span reads TKFE.

It belongs to the class I-like SAM-binding methyltransferase superfamily. TrmB family.

The enzyme catalyses guanosine(46) in tRNA + S-adenosyl-L-methionine = N(7)-methylguanosine(46) in tRNA + S-adenosyl-L-homocysteine. It functions in the pathway tRNA modification; N(7)-methylguanine-tRNA biosynthesis. Its function is as follows. Catalyzes the formation of N(7)-methylguanine at position 46 (m7G46) in tRNA. The protein is tRNA (guanine-N(7)-)-methyltransferase of Neisseria gonorrhoeae (strain ATCC 700825 / FA 1090).